The sequence spans 315 residues: BTB/POZ domain-containing adapter for CUL3-mediated RhoA degradation protein 3 (315 aa).

At M1 the chain carries N-acetylmethionine. S23 is modified (phosphoserine). In terms of domain architecture, BTB spans 32 to 100 (KYVKLNVGGA…LRDGGVPLPE (69 aa)). The PCNA-binding motif lies at 239-245 (QTKVEFP). Positions 269–294 (NALLEATGGAAGRSHHLDEDEERERE) are disordered.

Belongs to the BACURD family. Homotetramer; forms a two-fold symmetric tetramer in solution. Interacts with CUL3; interaction is direct and forms a 5:5 heterodecamer. Component of the BCR(BACURD3) E3 ubiquitin ligase complex, at least composed of CUL3, KCTD10/BACURD3 and RBX1. Interacts with DNA polymerase delta subunit 2/POLD2. Interacts with PCNA. Associated with the tectonic-like complex (also named B9 complex); however as Kctd10 has not been identified in all tectonic-like complexes purifications it is unclear whether it is really part of the complex.

It is found in the nucleus. It participates in protein modification; protein ubiquitination. Substrate-specific adapter of a BCR (BTB-CUL3-RBX1) E3 ubiquitin-protein ligase complex. The BCR(BACURD3) E3 ubiquitin ligase complex mediates the ubiquitination of target proteins, leading to their degradation by the proteasome. In Mus musculus (Mouse), this protein is BTB/POZ domain-containing adapter for CUL3-mediated RhoA degradation protein 3 (Kctd10).